Reading from the N-terminus, the 336-residue chain is Vacuolar protein sorting-associated protein 26B (336 aa).

3 positions are modified to phosphoserine: serine 302, serine 304, and serine 319.

The protein belongs to the VPS26 family. Component of the heterotrimeric retromer cargo-selective complex (CSC), also described as vacuolar protein sorting subcomplex (VPS), formed by VPS26 (VPS26A or VPS26B), VPS29 and VPS35. The CSC has a highly elongated structure with VPS26 and VPS29 binding independently at opposite distal ends of VPS35 as central platform. The CSC is believed to associate with variable sorting nexins to form functionally distinct retromer complex variants. The originally described SNX-BAR retromer is a pentamer containing the CSC and a heterodimeric membrane-deforming subcomplex formed between SNX1 or SNX2 and SNX5 or SNX6 (also called SNX-BAR subcomplex); the respective CSC and SNX-BAR subcomplexes associate with low affinity. The CSC associates with SNX3 to form a SNX3-retromer complex. The CSC associates with SNX27, the WASH complex and the SNX-BAR subcomplex to form the SNX27-retromer complex. Interacts with VPS29, VPS35, TBC1D5, GOLPH3, SNX27. In terms of tissue distribution, ubiquitously expressed in developing embryo and adult. Highly expressed in brain.

The protein resides in the cytoplasm. The protein localises to the membrane. It localises to the early endosome. It is found in the late endosome. In terms of biological role, acts as a component of the retromer cargo-selective complex (CSC). The CSC is believed to be the core functional component of retromer or respective retromer complex variants acting to prevent missorting of selected transmembrane cargo proteins into the lysosomal degradation pathway. The recruitment of the CSC to the endosomal membrane involves RAB7A and SNX3. The SNX-BAR retromer mediates retrograde transport of cargo proteins from endosomes to the trans-Golgi network (TGN) and is involved in endosome-to-plasma membrane transport for cargo protein recycling. The SNX3-retromer mediates the retrograde transport of WLS distinct from the SNX-BAR retromer pathway. The SNX27-retromer is believed to be involved in endosome-to-plasma membrane trafficking and recycling of a broad spectrum of cargo proteins. The CSC seems to act as recruitment hub for other proteins, such as the WASH complex and TBC1D5. May be involved in retrograde transport of SORT1 but not of IGF2R. Acts redundantly with VSP26A in SNX-27 mediated endocytic recycling of SLC2A1/GLUT1. This chain is Vacuolar protein sorting-associated protein 26B (Vps26b), found in Mus musculus (Mouse).